The sequence spans 750 residues: Photosystem I P700 chlorophyll a apoprotein A1 (750 aa).

Helical transmembrane passes span 70-93 (VFSA…FHGA), 156-179 (LYCT…FHYH), 195-219 (LNHH…HVSL), 291-309 (IAHH…GHMY), 346-369 (WHAQ…HHMY), 385-411 (LSLF…IFMV), 433-455 (AIIS…LYIH), and 531-549 (FLVH…LILL). 2 residues coordinate [4Fe-4S] cluster: Cys573 and Cys582. A run of 2 helical transmembrane segments spans residues 589-610 (HVFL…HFSW) and 664-686 (LSAY…MFLF). His675 serves as a coordination point for chlorophyll a'. Residues Met683 and Tyr691 each contribute to the chlorophyll a site. Phylloquinone is bound at residue Trp692. The helical transmembrane segment at 724-744 (AVGVTHYLLGGIATTWAFFLA) threads the bilayer.

Belongs to the PsaA/PsaB family. In terms of assembly, the PsaA/B heterodimer binds the P700 chlorophyll special pair and subsequent electron acceptors. PSI consists of a core antenna complex that captures photons, and an electron transfer chain that converts photonic excitation into a charge separation. The eukaryotic PSI reaction center is composed of at least 11 subunits. It depends on P700 is a chlorophyll a/chlorophyll a' dimer, A0 is one or more chlorophyll a, A1 is one or both phylloquinones and FX is a shared 4Fe-4S iron-sulfur center. as a cofactor.

Its subcellular location is the plastid. The protein resides in the chloroplast thylakoid membrane. It catalyses the reaction reduced [plastocyanin] + hnu + oxidized [2Fe-2S]-[ferredoxin] = oxidized [plastocyanin] + reduced [2Fe-2S]-[ferredoxin]. PsaA and PsaB bind P700, the primary electron donor of photosystem I (PSI), as well as the electron acceptors A0, A1 and FX. PSI is a plastocyanin-ferredoxin oxidoreductase, converting photonic excitation into a charge separation, which transfers an electron from the donor P700 chlorophyll pair to the spectroscopically characterized acceptors A0, A1, FX, FA and FB in turn. Oxidized P700 is reduced on the lumenal side of the thylakoid membrane by plastocyanin. This is Photosystem I P700 chlorophyll a apoprotein A1 from Oryza nivara (Indian wild rice).